Consider the following 1846-residue polypeptide: Brefeldin A-inhibited guanine nucleotide-exchange protein 1 (1846 aa).

The tract at residues 2–224 (YEGKKTKNMF…QEAKQMERER (223 aa)) is DCB; DCB:DCB domain and DCB:HUS domain interaction. The residue at position 52 (serine 52) is a Phosphoserine. Disordered stretches follow at residues 216–249 (EAKQ…LRYL), 264–304 (DLEP…ATAA), and 347–410 (ISAS…SPGA). Basic and acidic residues predominate over residues 264–277 (DLEPQTHDVDKSLQ). Phosphoserine is present on residues serine 286, serine 289, and serine 290. 2 stretches are compositionally biased toward polar residues: residues 348 to 357 (SASTEGNTGT) and 391 to 406 (SVSS…SSGP). Serine 394 and serine 407 each carry phosphoserine. The HUS; DCB:HUS domain interaction stretch occupies residues 554–574 (ADAQSVVDIYVNYDCDLNAAN). Residues 631–684 (PNSQTTLGQEKPSEQEISEVKHPETINRYGSLNSLESTSSSGIGSYSTQMSGTD) form a disordered region. Positions 641–655 (KPSEQEISEVKHPET) are enriched in basic and acidic residues. The span at 661-681 (SLNSLESTSSSGIGSYSTQMS) shows a compositional bias: low complexity. The 190-residue stretch at 688–877 (QFEVLKQQKE…SAIYNEIAGK (190 aa)) folds into the SEC7 domain. The Nuclear localization signal (NLS) motif lies at 708–712 (KKPKR). Phosphoserine occurs at positions 1076, 1563, and 1566.

In terms of assembly, homodimer. Interacts with ARFGEF2/BIG2; both proteins are probably part of the same or very similar macromolecular complexes. Interacts with FKBP2. Interacts with MYO9B. Interacts with PRKAR1A and PRKAR2A. Interacts with PPP1CC. Interacts with NCL, FBL, NUP62 and U3 small nucleolar RNA. Interacts with DPY30. Interacts with PDE3A. Interacts with KANK1. Interacts with TBC1D22A and TBC1D22B. Phosphorylated. In vitro phosphorylated by PKA reducing its GEF activity and dephosphorylated by phosphatase PP1.

Its subcellular location is the cytoplasm. It is found in the perinuclear region. It localises to the golgi apparatus. The protein localises to the trans-Golgi network. The protein resides in the nucleus. Its subcellular location is the nucleolus. It is found in the nucleus matrix. It localises to the membrane. Inhibited by brefeldin A. Promotes guanine-nucleotide exchange on ARF1 and ARF3. Promotes the activation of ARF1/ARF3 through replacement of GDP with GTP. Involved in vesicular trafficking. Required for the maintenance of Golgi structure; the function may be independent of its GEF activity. Required for the maturation of integrin beta-1 in the Golgi. Involved in the establishment and persistence of cell polarity during directed cell movement in wound healing. Proposed to act as A kinase-anchoring protein (AKAP) and may mediate crosstalk between Arf and PKA pathways. Inhibits GAP activity of MYO9B probably through competitive RhoA binding. The function in the nucleus remains to be determined. The chain is Brefeldin A-inhibited guanine nucleotide-exchange protein 1 (Arfgef1) from Mus musculus (Mouse).